The sequence spans 349 residues: Isopentenyl-diphosphate delta-isomerase (349 aa).

9 to 10 (RK) contacts substrate. FMN is bound by residues 65–67 (AMT), Ser95, and Asn124. 95–97 (STH) lines the substrate pocket. Gln154 is a binding site for substrate. Glu155 contributes to the Mg(2+) binding site. Residues Lys186, Ser211, Thr216, 262–264 (GLR), and 283–284 (SR) each bind FMN.

This sequence belongs to the IPP isomerase type 2 family. Homooctamer. Dimer of tetramers. FMN serves as cofactor. NADPH is required as a cofactor. Requires Mg(2+) as cofactor.

The protein localises to the cytoplasm. It catalyses the reaction isopentenyl diphosphate = dimethylallyl diphosphate. In terms of biological role, involved in the biosynthesis of isoprenoids. Catalyzes the 1,3-allylic rearrangement of the homoallylic substrate isopentenyl (IPP) to its allylic isomer, dimethylallyl diphosphate (DMAPP). In Staphylococcus aureus (strain USA300 / TCH1516), this protein is Isopentenyl-diphosphate delta-isomerase.